We begin with the raw amino-acid sequence, 213 residues long: Orotate phosphoribosyltransferase (213 aa).

K26 provides a ligand contact to 5-phospho-alpha-D-ribose 1-diphosphate. 34–35 serves as a coordination point for orotate; it reads FF. Residues 72–73, R99, K100, K103, H105, and 124–132 contribute to the 5-phospho-alpha-D-ribose 1-diphosphate site; these read YK and DDVITAGTA. Residues T128 and R156 each coordinate orotate.

Belongs to the purine/pyrimidine phosphoribosyltransferase family. PyrE subfamily. In terms of assembly, homodimer. It depends on Mg(2+) as a cofactor.

It catalyses the reaction orotidine 5'-phosphate + diphosphate = orotate + 5-phospho-alpha-D-ribose 1-diphosphate. The protein operates within pyrimidine metabolism; UMP biosynthesis via de novo pathway; UMP from orotate: step 1/2. Catalyzes the transfer of a ribosyl phosphate group from 5-phosphoribose 1-diphosphate to orotate, leading to the formation of orotidine monophosphate (OMP). The sequence is that of Orotate phosphoribosyltransferase from Klebsiella pneumoniae (strain 342).